Reading from the N-terminus, the 545-residue chain is Solute carrier family 22 member 6 (545 aa).

Residues 1–9 (MAFNDLLKQ) are Cytoplasmic-facing. Residues 10-30 (VGGVGRFQLIQVTMVVAPLLL) traverse the membrane as a helical segment. Residues 31–129 (MASHNTLQNF…LVCSHRAFRQ (99 aa)) are Extracellular-facing. N-linked (GlcNAc...) asparagine glycans are attached at residues N39, N56, N86, N91, and N107. A helical membrane pass occupies residues 130–150 (LAQSLFMVGVLLGAMMFGYLA). Over 151 to 157 (DRLGRRK) the chain is Cytoplasmic. A helical transmembrane segment spans residues 158–177 (VLILNYLQTAVSGTCAAYAP). N-linked (GlcNAc...) asparagine glycosylation occurs at N178. Residues 178–180 (NYT) lie on the Extracellular side of the membrane. Residues 181–201 (VYCIFRLLSGMSLASIAINCM) traverse the membrane as a helical segment. Topologically, residues 202 to 218 (TLNMEWMPIHTRAYVGT) are cytoplasmic. Residues 219 to 239 (LIGYVYSLGQFLLAGIAYAVP) traverse the membrane as a helical segment. The Extracellular segment spans residues 240–242 (HWR). Residues 243 to 263 (HLQLAVSVPFFVAFIYSWFFI) traverse the membrane as a helical segment. Over 264 to 331 (ESARWYSSSG…ELLRCPTLRR (68 aa)) the chain is Cytoplasmic. The helical transmembrane segment at 332-352 (LFLCLSMLWFATSFAYYGLVM) threads the bilayer. Over 353-362 (DLQGFGVSMY) the chain is Extracellular. The helical transmembrane segment at 363 to 383 (LIQVIFGAVDLPAKFVCFLVI) threads the bilayer. Topologically, residues 384 to 389 (NSMGRR) are cytoplasmic. The helical transmembrane segment at 390–410 (PAQLASLLLAGICILVNGIIP) threads the bilayer. Topologically, residues 411–419 (RGHTIIRTS) are extracellular. A helical transmembrane segment spans residues 420-440 (LAVLGKGCLASSFNCIFLYTG). Residues 441–450 (ELYPTMIRQT) are Cytoplasmic-facing. Residues 451–471 (GLGMGSTMARVGSIVSPLISM) traverse the membrane as a helical segment. Residues 472–478 (TAEFYPS) lie on the Extracellular side of the membrane. The helical transmembrane segment at 479–499 (IPLFIFGAVPVAASAVTALLP) threads the bilayer. The Cytoplasmic segment spans residues 500 to 545 (ETLGQPLPDTVQDLKSRSRGKQKQQQLEQQKQMIPLQVSTQEKNGL). The segment at 515-545 (SRSRGKQKQQQLEQQKQMIPLQVSTQEKNGL) is disordered. The segment covering 522–531 (KQQQLEQQKQ) has biased composition (low complexity). A compositionally biased stretch (polar residues) spans 536–545 (QVSTQEKNGL).

The protein belongs to the major facilitator (TC 2.A.1) superfamily. Organic cation transporter (TC 2.A.1.19) family. Glycosylated. Glycosylation is necessary for proper targeting of the transporter to the plasma membrane. As to expression, expressed in kidney. In kidney, restricted to the proximal convoluted tubule (representing S1 and S2 segments). In brain, expressed in neurons of the cortex cerebri and hippocampus as well as in the ependymal cell layer of the choroid plexus.

The protein localises to the basolateral cell membrane. Its subcellular location is the basal cell membrane. It catalyses the reaction (6R)-L-erythro-5,6,7,8-tetrahydrobiopterin(out) + a dicarboxylate(in) = (6R)-L-erythro-5,6,7,8-tetrahydrobiopterin(in) + a dicarboxylate(out). It carries out the reaction L-erythro-7,8-dihydrobiopterin(out) + a dicarboxylate(in) = L-erythro-7,8-dihydrobiopterin(in) + a dicarboxylate(out). The enzyme catalyses L-sepiapterin(out) + a dicarboxylate(in) = L-sepiapterin(in) + a dicarboxylate(out). The catalysed reaction is prostaglandin F2alpha(out) + a dicarboxylate(in) = prostaglandin F2alpha(in) + a dicarboxylate(out). It catalyses the reaction prostaglandin E2(out) + a dicarboxylate(in) = prostaglandin E2(in) + a dicarboxylate(out). It carries out the reaction 3',5'-cyclic AMP(out) + a dicarboxylate(in) = 3',5'-cyclic AMP(in) + a dicarboxylate(out). The enzyme catalyses 3',5'-cyclic GMP(out) + a dicarboxylate(in) = 3',5'-cyclic GMP(in) + a dicarboxylate(out). The catalysed reaction is urate(out) + a dicarboxylate(in) = urate(in) + a dicarboxylate(out). It catalyses the reaction kynurenate(out) + glutarate(in) = kynurenate(in) + glutarate(out). It carries out the reaction (indol-3-yl)acetate(out) + a dicarboxylate(in) = (indol-3-yl)acetate(in) + a dicarboxylate(out). The enzyme catalyses indoxyl sulfate(out) + a dicarboxylate(in) = indoxyl sulfate(in) + a dicarboxylate(out). The catalysed reaction is N-benzoylglycine(out) + a dicarboxylate(in) = N-benzoylglycine(in) + a dicarboxylate(out). It catalyses the reaction 3-carboxy-4-methyl-5-propyl-2-furanpropanoate(out) + a dicarboxylate(in) = 3-carboxy-4-methyl-5-propyl-2-furanpropanoate(in) + a dicarboxylate(out). In terms of biological role, secondary active transporter that functions as a Na(+)-independent organic anion (OA)/dicarboxylate antiporter where the uptake of one molecule of OA into the cell is coupled with an efflux of one molecule of intracellular dicarboxylate such as 2-oxoglutarate or glutarate. Mediates the uptake of OA across the basolateral side of proximal tubule epithelial cells, thereby contributing to the renal elimination of endogenous OA from the systemic circulation into the urine. Functions as a biopterin transporters involved in the uptake and the secretion of coenzymes tetrahydrobiopterin (BH4), dihydrobiopterin (BH2) and sepiapterin to urine, thereby determining baseline levels of blood biopterins. Transports prostaglandin E2 (PGE2) and prostaglandin F2-alpha (PGF2-alpha) and may contribute to their renal excretion. Involved in the transport of neuroactive tryptophan metabolites kynurenate (KYNA) and xanthurenate (XA). May transport glutamate. Also involved in the disposition of uremic toxins and potentially toxic xenobiotics by the renal organic anion secretory pathway, helping reduce their undesired toxicological effects on the body. Uremic toxins include the indoxyl sulfate (IS), hippurate/N-benzoylglycine (HA), indole acetate (IA) and 3-carboxy-4- methyl-5-propyl-2-furanpropionate(CMPF) and urate. Xenobiotics include the mycotoxin ochratoxin (OTA). May also contribute to the transport of organic compounds in testes across the blood-testis-barrier. This Mus musculus (Mouse) protein is Solute carrier family 22 member 6.